The sequence spans 391 residues: MRELLDSEYDVIVIGAGPGGSMASYHSSINGAKTLLIDKSQEIGTPVRCAEAVPYLDEFGINPDPSFIRSKIDGGILVAPNGKKIIVKGGKTQGYVVERKIFDKHLAVRSANVGTKIAIKSRVVGLDYDGEKYTVIVNHLGQIYAIKAKIVIAADGVESSIAEMAGIKCKKKVTEICSCAEYEMTNVKLLDKNMMEFYFGDICPKGYVWIFPKGETANVGLGIIDSKKKAIDYLNEFLEHPLLEGRLDNATPIEFKCGGAPVGGPIEKTVADNFMVVGDAAGQISPISGGGIYLSLSCGSIAGKVAGEAIKSNNCSEDYLVEYENRWKEKYYKLLMDELKYKKVLQKFSEKELNALADAMDERLEEIDVAKIAFRAVKRAPSLLKYFKDII.

10 residues coordinate FAD: G19, D38, C49, A50, A52, R99, V123, D279, G291, and I292. V369 provides a ligand contact to a 2,3-bis-O-(geranylgeranyl)-sn-glycerol 1-phospholipid.

This sequence belongs to the geranylgeranyl reductase family. DGGGPL reductase subfamily. FAD serves as cofactor.

The catalysed reaction is a 2,3-bis-O-phytanyl-sn-glycerol 1-phospholipid + 8 A = a 2,3-bis-O-(geranylgeranyl)-sn-glycerol 1-phospholipid + 8 AH2. The enzyme catalyses 2,3-bis-O-(phytanyl)-sn-glycerol 1-phosphate + 8 A = 2,3-bis-O-(geranylgeranyl)-sn-glycerol 1-phosphate + 8 AH2. It carries out the reaction CDP-2,3-bis-O-(geranylgeranyl)-sn-glycerol + 8 AH2 = CDP-2,3-bis-O-(phytanyl)-sn-glycerol + 8 A. It catalyses the reaction archaetidylserine + 8 AH2 = 2,3-bis-O-phytanyl-sn-glycero-3-phospho-L-serine + 8 A. It functions in the pathway membrane lipid metabolism; glycerophospholipid metabolism. Its function is as follows. Is involved in the reduction of 2,3-digeranylgeranylglycerophospholipids (unsaturated archaeols) into 2,3-diphytanylglycerophospholipids (saturated archaeols) in the biosynthesis of archaeal membrane lipids. Catalyzes the formation of archaetidic acid (2,3-di-O-phytanyl-sn-glyceryl phosphate) from 2,3-di-O-geranylgeranylglyceryl phosphate (DGGGP) via the hydrogenation of each double bond of the isoprenoid chains. Is also probably able to reduce double bonds of geranyl groups in CDP-2,3-bis-O-(geranylgeranyl)-sn-glycerol and archaetidylserine, thus acting at various stages in the biosynthesis of archaeal membrane lipids. The polypeptide is Digeranylgeranylglycerophospholipid reductase (Methanococcus aeolicus (strain ATCC BAA-1280 / DSM 17508 / OCM 812 / Nankai-3)).